Reading from the N-terminus, the 386-residue chain is Cell division protein FtsZ (386 aa).

GTP contacts are provided by residues 18–22, 105–107, E136, R140, and D184; these read GGGVN and GTG.

This sequence belongs to the FtsZ family. As to quaternary structure, homodimer. Polymerizes to form a dynamic ring structure in a strictly GTP-dependent manner. Interacts directly with several other division proteins.

The protein resides in the cytoplasm. Functionally, essential cell division protein that forms a contractile ring structure (Z ring) at the future cell division site. The regulation of the ring assembly controls the timing and the location of cell division. One of the functions of the FtsZ ring is to recruit other cell division proteins to the septum to produce a new cell wall between the dividing cells. Binds GTP and shows GTPase activity. The chain is Cell division protein FtsZ from Mycobacterium kansasii.